A 396-amino-acid chain; its full sequence is Phosphopentomutase (396 aa).

Residues D13, D288, H293, D329, H330, and H341 each coordinate Mn(2+).

This sequence belongs to the phosphopentomutase family. The cofactor is Mn(2+).

It is found in the cytoplasm. The enzyme catalyses 2-deoxy-alpha-D-ribose 1-phosphate = 2-deoxy-D-ribose 5-phosphate. It carries out the reaction alpha-D-ribose 1-phosphate = D-ribose 5-phosphate. The protein operates within carbohydrate degradation; 2-deoxy-D-ribose 1-phosphate degradation; D-glyceraldehyde 3-phosphate and acetaldehyde from 2-deoxy-alpha-D-ribose 1-phosphate: step 1/2. In terms of biological role, isomerase that catalyzes the conversion of deoxy-ribose 1-phosphate (dRib-1-P) and ribose 1-phosphate (Rib-1-P) to deoxy-ribose 5-phosphate (dRib-5-P) and ribose 5-phosphate (Rib-5-P), respectively. This is Phosphopentomutase from Clostridium botulinum (strain Alaska E43 / Type E3).